We begin with the raw amino-acid sequence, 685 residues long: Serotransferrin (685 aa).

A signal peptide spans 1 to 16 (MKPLLLLPLLGCLATI). Transferrin-like domains lie at 23–329 (VKWC…ALKI) and 340–666 (MKWC…SLRT). A disulfide bridge connects residues Cys26 and Cys48. The Fe(3+) site is built by Asp72 and Tyr102. Cystine bridges form between Cys125-Cys206, Cys170-Cys184, and Cys234-Cys248. Hydrogencarbonate contacts are provided by Thr127, Lys131, Ala133, and Gly134. Tyr200 serves as a coordination point for Fe(3+). His256 is a binding site for Fe(3+). Cystine bridges form between Cys343–Cys379 and Cys353–Cys370. Residues Asp394 and Tyr428 each contribute to the Fe(3+) site. 7 disulfides stabilise this stretch: Cys404–Cys678, Cys419–Cys639, Cys451–Cys526, Cys475–Cys667, Cys485–Cys499, Cys496–Cys509, and Cys566–Cys580. Positions 453, 457, 459, and 460 each coordinate hydrogencarbonate. Asn476 is a glycosylation site (N-linked (GlcNAc...) asparagine). A Fe(3+)-binding site is contributed by Tyr520. His588 is a Fe(3+) binding site.

This sequence belongs to the transferrin family. In terms of assembly, monomer.

The protein resides in the secreted. In terms of biological role, transferrins are iron binding transport proteins which can bind two Fe(3+) ions in association with the binding of an anion, usually bicarbonate. The sequence is that of Serotransferrin (tf) from Paralichthys olivaceus (Bastard halibut).